Reading from the N-terminus, the 305-residue chain is Virulence plasmid integrase pGP7-D (305 aa).

One can recognise a Core-binding (CB) domain in the interval 13–99 (LTFGDASEIW…CYISFTKFLY (87 aa)). A Tyr recombinase domain is found at 127-305 (IKTESISKQE…SPLVQTPPIL (179 aa)). Catalysis depends on residues Lys-188 and Arg-257. Tyr-289 (O-(3'-phospho-DNA)-tyrosine intermediate) is an active-site residue.

The protein belongs to the 'phage' integrase family.

In Chlamydia trachomatis serovar L2 (strain ATCC VR-902B / DSM 19102 / 434/Bu), this protein is Virulence plasmid integrase pGP7-D.